A 463-amino-acid chain; its full sequence is Glycine--tRNA ligase (463 aa).

Residues R102 and E165 each contribute to the substrate site. ATP-binding positions include 197-199 (RNE), 207-212 (FRTREF), 284-285 (EL), and 328-331 (GLTR). Position 212-216 (212-216 (FEQME)) interacts with substrate. 324-328 (EPAAG) serves as a coordination point for substrate.

Belongs to the class-II aminoacyl-tRNA synthetase family. As to quaternary structure, homodimer.

Its subcellular location is the cytoplasm. The catalysed reaction is tRNA(Gly) + glycine + ATP = glycyl-tRNA(Gly) + AMP + diphosphate. Catalyzes the attachment of glycine to tRNA(Gly). The sequence is that of Glycine--tRNA ligase from Mycobacterium bovis (strain ATCC BAA-935 / AF2122/97).